A 191-amino-acid polypeptide reads, in one-letter code: Ferric nitrobindin-like protein (191 aa).

Positions 20–26 match the GXWXGXG motif; it reads GNWAGAG.

Belongs to the nitrobindin family.

The protein is Ferric nitrobindin-like protein of Streptomyces avermitilis (strain ATCC 31267 / DSM 46492 / JCM 5070 / NBRC 14893 / NCIMB 12804 / NRRL 8165 / MA-4680).